The sequence spans 99 residues: Large ribosomal subunit protein uL23 (99 aa).

This sequence belongs to the universal ribosomal protein uL23 family. In terms of assembly, part of the 50S ribosomal subunit. Contacts protein L29, and trigger factor when it is bound to the ribosome.

One of the early assembly proteins it binds 23S rRNA. One of the proteins that surrounds the polypeptide exit tunnel on the outside of the ribosome. Forms the main docking site for trigger factor binding to the ribosome. The polypeptide is Large ribosomal subunit protein uL23 (Leifsonia xyli subsp. xyli (strain CTCB07)).